The chain runs to 183 residues: Translation initiation factor IF-3 (183 aa).

It belongs to the IF-3 family. In terms of assembly, monomer.

The protein resides in the cytoplasm. Its function is as follows. IF-3 binds to the 30S ribosomal subunit and shifts the equilibrium between 70S ribosomes and their 50S and 30S subunits in favor of the free subunits, thus enhancing the availability of 30S subunits on which protein synthesis initiation begins. In Pseudomonas putida (strain W619), this protein is Translation initiation factor IF-3.